The chain runs to 1541 residues: Regulator of G-protein signaling loco (1541 aa).

The segment at 1 to 66 is disordered; that stretch reads MHHHHPPLPI…RRKKRANYNY (66 aa). Residues 11–36 show a composition bias toward low complexity; it reads TGASGSTAVGTGAAAAEDASPAANSG. Over residues 40–53 the composition is skewed to polar residues; the sequence is ISTSTTPSGSNSQQ. One can recognise a PDZ domain in the interval 71 to 148; it reads TVEVRRGYNG…SIRMQIAENY (78 aa). Residues 182-222 form a disordered region; that stretch reads AKLHRLRNSPQKKLNPPEAVEPHKSKSSPDHPTLKPVLEDP. Basic and acidic residues predominate over residues 201–214; that stretch reads VEPHKSKSSPDHPT. A PID domain is found at 247 to 423; it reads AALECRVIVG…VVNLVRSMYT (177 aa). Disordered regions lie at residues 449-473 and 708-761; these read GAVA…SNSD and SEPD…ASMN. 2 stretches are compositionally biased toward polar residues: residues 457–473 and 744–761; these read PQPS…SNSD and EQQQ…ASMN. Positions 827 to 943 constitute an RGS domain; that stretch reads SFERMLQDAA…IRSDLYKSCV (117 aa). The disordered stretch occupies residues 978–1004; sequence SASNAEDRRRKSLLPWHRKTRSKSRDR. Basic residues predominate over residues 987–999; the sequence is RKSLLPWHRKTRS. RBD domains lie at 1072-1142 and 1143-1213; these read SLCR…IERR and VAFK…IVMV. The interval 1258–1327 is disordered; that stretch reads DAAASEKSRP…SEEAATTQAV (70 aa). Residues 1273–1285 are compositionally biased toward polar residues; the sequence is MKSNEAPSETSSL. The span at 1312–1325 shows a compositional bias: low complexity; the sequence is TSSSQQSEEAATTQ. Residues 1354–1376 enclose the GoLoco domain; sequence QDELLEGLKRAQLARLEDQRGTE. Residues 1410 to 1513 form a disordered region; that stretch reads KVPATPTEIP…ASKPGTFASK (104 aa). Over residues 1460 to 1469 the composition is skewed to pro residues; the sequence is APPPLPPKPK. A compositionally biased stretch (polar residues) spans 1483-1499; the sequence is PTGNYCNKYSPSKQVPT.

As to quaternary structure, interacts (via GoLoco and RGS domains) with Galphai (via GDP- or GTP-bound forms). Expressed in surface and longitudinal glial cells, gut and heart (at protein level).

Its subcellular location is the cytoplasm. It localises to the cell membrane. The protein localises to the apical cell membrane. Functionally, acts as a regulator of G protein signaling (RGS). Modulates G protein alpha subunits nucleotide exchange and hydrolysis activities by functioning either as a GTPase-activating protein (GAP), thereby driving G protein alpha subunits into their inactive GDP-bound form, or as a GDP-dissociation inhibitor (GDI). Confers GDI and GAP activities on G(i) alpha subunit Galphai. Confers GAP activity on G(o)-alpha subunit Galphao and G(i) alpha subunit Galphai. Involved in the dorsal-ventral axis formation of the egg. Acts as a G-protein signaling for glial cell differentiation during embryogenesis; Galphai, Galphao and the G-protein coupled receptor, moody, are required in the surface glia to achieve effective insulation of the nerve cord. May be essential for nurse cell dumping during oogenesis. Required in neuroblast asymmetrical cell division. Plays a role in stress resistance and life span control. In Drosophila melanogaster (Fruit fly), this protein is Regulator of G-protein signaling loco (loco).